Consider the following 288-residue polypeptide: NADPH-dependent aldehyde reductase 1, chloroplastic (288 aa).

The segment covering 1-18 (MASEKQKQHAQPGKEHVM) has biased composition (basic and acidic residues). Residues 1-32 (MASEKQKQHAQPGKEHVMESSPQFSSSDYQPS) form a disordered region. Over residues 20 to 32 (SSPQFSSSDYQPS) the composition is skewed to polar residues. Position 47–71 (47–71 (SGIGRAVGYCFASEGATVAFTYVKG)) interacts with NADP(+). Residue Ser-179 participates in substrate binding. Tyr-192 acts as the Proton acceptor in catalysis.

This sequence belongs to the short-chain dehydrogenases/reductases (SDR) family.

The protein resides in the plastid. The protein localises to the chloroplast. In terms of biological role, aldehyde reductase that catalyzes the reduction of the aldehyde carbonyl groups on saturated and alpha,beta-unsaturated aldehydes with more than 5 carbons. No activity on alpha,beta-unsaturated ketones. Can use propionaldehyde, butyraldehyde, methylglyoxal, (e)-2-pentenal, (E)-2-hexenal, (Z)-3-hexenal and (E)-2-nonenal as substrates, but not propenal (acrolein), crotonaldehyde, 2-butanone, 3-buten-2-one or 1-penten-3-one. May act as a short alcohol-polyol-sugar dehydrogenase possibly related to carbohydrate metabolism and the acquisition of desiccation tolerance. May also be involved in signal transduction. The chain is NADPH-dependent aldehyde reductase 1, chloroplastic from Arabidopsis thaliana (Mouse-ear cress).